A 279-amino-acid chain; its full sequence is RRP15-like protein (279 aa).

Disordered regions lie at residues 1 to 40 (MALLTAKRPKKEAAPATDTSNNESDSEDSQNVDGDTGANA), 56 to 120 (GPTV…TERR), and 200 to 279 (KSTA…DEED). Over residues 73-83 (KTSEAAKKPGF) the composition is skewed to basic and acidic residues. 2 stretches are compositionally biased toward acidic residues: residues 93-104 (KEEDDDDEEDGD) and 213-224 (QETDDDDEDDTA). Over residues 232–245 (KKSEWNVLREDFMT) the composition is skewed to basic and acidic residues. Positions 267–279 (DEADDSDDDDEED) are enriched in acidic residues.

Belongs to the RRP15 family.

This chain is RRP15-like protein, found in Drosophila pseudoobscura pseudoobscura (Fruit fly).